Reading from the N-terminus, the 316-residue chain is Ubiquinol oxidase, mitochondrial (316 aa).

A mitochondrion-targeting transit peptide spans 1-26 (MGVRAQPLLARSLITTTQPWILSARS). A helical membrane pass occupies residues 124–144 (VHRAVVLETVAAVPGMVAGML). 3 residues coordinate Fe cation: Glu131, Glu170, and His173. A helical membrane pass occupies residues 189-209 (MLVALVQTLFFNVYFLAYMLF). 3 residues coordinate Fe cation: Glu221, Glu272, and His275.

Belongs to the alternative oxidase family. Fe cation is required as a cofactor.

It is found in the mitochondrion inner membrane. It catalyses the reaction 2 a ubiquinol + O2 = 2 a ubiquinone + 2 H2O. Functionally, alternative oxidase which function may be to reoxidize reducing equivalents produced by glycolysis such as ubiquinol. The chain is Ubiquinol oxidase, mitochondrial (AOX) from Batrachochytrium dendrobatidis (strain JAM81 / FGSC 10211) (Frog chytrid fungus).